The following is a 542-amino-acid chain: Chaperonin GroEL 1 (542 aa).

Residues 29–32 (TIGP), 86–90 (DGTTT), Gly-414, 479–481 (DAL), and Asp-495 contribute to the ATP site.

The protein belongs to the chaperonin (HSP60) family. Forms a cylinder of 14 subunits composed of two heptameric rings stacked back-to-back. Interacts with the co-chaperonin GroES.

Its subcellular location is the cytoplasm. It catalyses the reaction ATP + H2O + a folded polypeptide = ADP + phosphate + an unfolded polypeptide.. Together with its co-chaperonin GroES, plays an essential role in assisting protein folding. The GroEL-GroES system forms a nano-cage that allows encapsulation of the non-native substrate proteins and provides a physical environment optimized to promote and accelerate protein folding. The chain is Chaperonin GroEL 1 from Synechococcus sp. (strain JA-3-3Ab) (Cyanobacteria bacterium Yellowstone A-Prime).